Reading from the N-terminus, the 288-residue chain is 33 kDa chaperonin (288 aa).

Intrachain disulfides connect Cys-236–Cys-238 and Cys-269–Cys-272.

It belongs to the HSP33 family. Under oxidizing conditions two disulfide bonds are formed involving the reactive cysteines. Under reducing conditions zinc is bound to the reactive cysteines and the protein is inactive.

It localises to the cytoplasm. In terms of biological role, redox regulated molecular chaperone. Protects both thermally unfolding and oxidatively damaged proteins from irreversible aggregation. Plays an important role in the bacterial defense system toward oxidative stress. The protein is 33 kDa chaperonin of Lactococcus lactis subsp. cremoris (strain SK11).